A 469-amino-acid chain; its full sequence is Argininosuccinate lyase (469 aa).

Belongs to the lyase 1 family. Argininosuccinate lyase subfamily.

It is found in the cytoplasm. The catalysed reaction is 2-(N(omega)-L-arginino)succinate = fumarate + L-arginine. Its pathway is amino-acid biosynthesis; L-arginine biosynthesis; L-arginine from L-ornithine and carbamoyl phosphate: step 3/3. This Mycolicibacterium smegmatis (strain ATCC 700084 / mc(2)155) (Mycobacterium smegmatis) protein is Argininosuccinate lyase.